A 146-amino-acid polypeptide reads, in one-letter code: Ribonuclease H (146 aa).

The region spanning 1 to 141 (MEKIDIFTDG…ADALANRGVE (141 aa)) is the RNase H type-1 domain. The Mg(2+) site is built by D9, E47, D69, and D133.

Belongs to the RNase H family. In terms of assembly, monomer. It depends on Mg(2+) as a cofactor.

The protein resides in the cytoplasm. The enzyme catalyses Endonucleolytic cleavage to 5'-phosphomonoester.. Endonuclease that specifically degrades the RNA of RNA-DNA hybrids. This chain is Ribonuclease H, found in Herminiimonas arsenicoxydans.